The sequence spans 444 residues: Acyl-CoA 6-desaturase (444 aa).

Residues 1 to 131 (MGKGGNQGEG…DMNLFKTNHV (131 aa)) lie on the Cytoplasmic side of the membrane. The region spanning 18 to 95 (MPTFSWEEIQ…LKPLLIGELA (78 aa)) is the Cytochrome b5 heme-binding domain. The chain crosses the membrane as a helical span at residues 132 to 152 (FFLLLLAHIIALESIAWFTVF). Residues 153-157 (YFGNG) are Lumenal-facing. A helical transmembrane segment spans residues 158–178 (WIPTLITAFVLATSQAQAGWL). Topologically, residues 179–264 (QHDYGHLSVY…KYLPYNHQHE (86 aa)) are cytoplasmic. Residues 180-184 (HDYGH) carry the Histidine box-1 motif. A Histidine box-2 motif is present at residues 217 to 221 (HFQHH). A helical transmembrane segment spans residues 265 to 285 (YFFLIGPPLLIPMYFQYQIIM). Residues 286-305 (TMIVHKNWVDLAWAISYYIR) lie on the Lumenal side of the membrane. Residues 306–326 (FFVTYIPFYGILGALLFLNFI) traverse the membrane as a helical segment. The Cytoplasmic portion of the chain corresponds to 327-444 (RFLESHWFVW…KLWLDAYLHK (118 aa)). The Histidine box-3 motif lies at 382-386 (QIEHH).

It belongs to the fatty acid desaturase type 1 family.

Its subcellular location is the endoplasmic reticulum membrane. The catalysed reaction is (9Z,12Z)-octadecadienoyl-CoA + 2 Fe(II)-[cytochrome b5] + O2 + 2 H(+) = (6Z,9Z,12Z)-octadecatrienoyl-CoA + 2 Fe(III)-[cytochrome b5] + 2 H2O. It carries out the reaction (9Z,12Z,15Z)-octadecatrienoyl-CoA + 2 Fe(II)-[cytochrome b5] + O2 + 2 H(+) = (6Z,9Z,12Z,15Z)-octadecatetraenoyl-CoA + 2 Fe(III)-[cytochrome b5] + 2 H2O. The enzyme catalyses (9Z,12Z,15Z,18Z,21Z)-tetracosapentaenoyl-CoA + 2 Fe(II)-[cytochrome b5] + O2 + 2 H(+) = (6Z,9Z,12Z,15Z,18Z,21Z)-tetracosahexaenoyl-CoA + 2 Fe(III)-[cytochrome b5] + 2 H2O. It catalyses the reaction (11E)-octadecenoyl-CoA + 2 Fe(II)-[cytochrome b5] + O2 + 2 H(+) = (6Z,11E)-octadecadienoyl-CoA + 2 Fe(III)-[cytochrome b5] + 2 H2O. The catalysed reaction is (11Z,14Z)-eicosadienoyl-CoA + 2 Fe(II)-[cytochrome b5] + O2 + 2 H(+) = (8Z,11Z,14Z)-eicosatrienoyl-CoA + 2 Fe(III)-[cytochrome b5] + 2 H2O. It carries out the reaction (11Z,14Z,17Z)-eicosatrienoyl-CoA + 2 Fe(II)-[cytochrome b5] + O2 + 2 H(+) = (8Z,11Z,14Z,17Z)-eicosatetraenoyl-CoA + 2 Fe(III)-[cytochrome b5] + 2 H2O. The protein operates within lipid metabolism; polyunsaturated fatty acid biosynthesis. Involved in the biosynthesis of highly unsaturated fatty acids (HUFA) from the essential polyunsaturated fatty acids (PUFA) linoleic acid (LA) (18:2n-6) and alpha-linolenic acid (ALA) (18:3n-3) precursors, acting as a fatty acyl-coenzyme A (CoA) desaturase that introduces a cis double bond at carbon 6 of the fatty acyl chain. Catalyzes the first and rate limiting step in this pathway which is the desaturation of LA (18:2n-6) and ALA (18:3n-3) into gamma-linoleate (GLA) (18:3n-6) and stearidonate (18:4n-3), respectively. Subsequently, in the biosynthetic pathway of HUFA n-3 series, it desaturates tetracosapentaenoate (24:5n-3) to tetracosahexaenoate (24:6n-3), which is then converted to docosahexaenoate (DHA)(22:6n-3), an important lipid for nervous system function. It can also desaturate (11E)-octadecenoate (trans-vaccenoate) at carbon 6 generating (6Z,11E)-octadecadienoate. In addition to Delta-6 activity, this enzyme exhibits Delta-8 activity with slight biases toward n-3 fatty acyl-CoA substrates. This chain is Acyl-CoA 6-desaturase (FADS2), found in Macaca fascicularis (Crab-eating macaque).